The chain runs to 140 residues: Class I hydrophobin C (140 aa).

Positions 1–23 are cleaved as a signal peptide; sequence MKFFVPAFLFAATAMALPGSGSA. 4 disulfides stabilise this stretch: C41-C114, C49-C108, C50-C85, and C115-C133.

The protein belongs to the fungal hydrophobin family.

The protein resides in the secreted. It localises to the cell wall. Its function is as follows. Aerial growth, conidiation, and dispersal of filamentous fungi in the environment rely upon a capability of their secreting small amphipathic proteins called hydrophobins (HPBs) with low sequence identity. Class I can self-assemble into an outermost layer of rodlet bundles on aerial cell surfaces, conferring cellular hydrophobicity that supports fungal growth, development and dispersal; whereas Class II form highly ordered films at water-air interfaces through intermolecular interactions but contribute nothing to the rodlet structure. In P.expansum, hydrophobins contribute to germination, tolerance to cold stress and mycotoxins patulin and citrinin production. HfbC is involved in the virulence on apple. The sequence is that of Class I hydrophobin C from Penicillium expansum (Blue mold rot fungus).